A 369-amino-acid polypeptide reads, in one-letter code: Cytochrome P450 monooxygenase apf8 (369 aa).

Cysteine 303 serves as a coordination point for heme.

Belongs to the cytochrome P450 family. The cofactor is heme.

The protein operates within secondary metabolite biosynthesis. In terms of biological role, cytochrome P450 monooxygenase; part of the gene cluster that mediates the biosynthesis of the cyclic tetrapeptide apicidin F (APF). The non-ribosomal peptide synthetase apf1 incorporates four different amino acids to produce apicidin F: L-phenylalanine, D-pipecolic acid (D-pip), N-methoxy-L-tryptophan and L-2-aminooctanedioic acid. L-Phenylalanine is the only proteinogenic amino acid directly used by apf1. The 3 other apf1 substrates are non-proteinogenic and have to be modified by other enzymes of the cluster. Lysine is converted to delta-1-pyrroline-5-carboxylate (P5C) which is reduced to L-pipecolic acid (L-pip) by apf3. L-pip is epimerized to D-pip, probably by apf1 activity, prior to incorporation. L-Tryptophan is N-oxidyzed by one of the cytochrome P450 monooxygenases (apf7 or apf8), and further methylated at the hydroxy group by the O-methyltransferase apf6 to yield N-methoxy-L-tryptophan. The synthesis of the fourth apf1 substrate is more complex. The fatty acid synthase apf5 is involved in the synthesis of the octanoic acid backbone of L-2-aminooctanedioic acid by fixing one acetyl-CoA unit and three malonyl-CoA units. Then one of the cytochrome P450 monooxygenases (apf7 or apf8) may oxidize this backbone to 2-oxooctanoic acid. The aminotransferase apf4 is predicted to catalyze the exchange of the keto group with an amino group. The next step would be the oxidation of 2-aminooctanoic acid by one of the cytochrome P450 monooxygenases (apf7 or apf8). The last step is the oxidation of 2-amino-8-hydroxyoctanoic acid to 2-aminooctanedioic acid is catalyzed by the FAD-dependent monooxygenase apf9. This Gibberella fujikuroi (strain CBS 195.34 / IMI 58289 / NRRL A-6831) (Bakanae and foot rot disease fungus) protein is Cytochrome P450 monooxygenase apf8.